Here is a 350-residue protein sequence, read N- to C-terminus: 3-dehydroquinate synthase (350 aa).

Residues 106–110, 130–131, Lys-143, and Lys-152 each bind NAD(+); these read GVIGD and TS. Glu-185, His-246, and His-263 together coordinate Zn(2+).

Belongs to the sugar phosphate cyclases superfamily. Dehydroquinate synthase family. Co(2+) serves as cofactor. The cofactor is Zn(2+). It depends on NAD(+) as a cofactor.

It is found in the cytoplasm. It catalyses the reaction 7-phospho-2-dehydro-3-deoxy-D-arabino-heptonate = 3-dehydroquinate + phosphate. It participates in metabolic intermediate biosynthesis; chorismate biosynthesis; chorismate from D-erythrose 4-phosphate and phosphoenolpyruvate: step 2/7. Catalyzes the conversion of 3-deoxy-D-arabino-heptulosonate 7-phosphate (DAHP) to dehydroquinate (DHQ). The protein is 3-dehydroquinate synthase of Clostridium beijerinckii (strain ATCC 51743 / NCIMB 8052) (Clostridium acetobutylicum).